The sequence spans 256 residues: Imidazole glycerol phosphate synthase subunit HisF (256 aa).

Catalysis depends on residues Asp-12 and Asp-131.

This sequence belongs to the HisA/HisF family. In terms of assembly, heterodimer of HisH and HisF.

Its subcellular location is the cytoplasm. The enzyme catalyses 5-[(5-phospho-1-deoxy-D-ribulos-1-ylimino)methylamino]-1-(5-phospho-beta-D-ribosyl)imidazole-4-carboxamide + L-glutamine = D-erythro-1-(imidazol-4-yl)glycerol 3-phosphate + 5-amino-1-(5-phospho-beta-D-ribosyl)imidazole-4-carboxamide + L-glutamate + H(+). It functions in the pathway amino-acid biosynthesis; L-histidine biosynthesis; L-histidine from 5-phospho-alpha-D-ribose 1-diphosphate: step 5/9. In terms of biological role, IGPS catalyzes the conversion of PRFAR and glutamine to IGP, AICAR and glutamate. The HisF subunit catalyzes the cyclization activity that produces IGP and AICAR from PRFAR using the ammonia provided by the HisH subunit. The protein is Imidazole glycerol phosphate synthase subunit HisF of Pseudomonas fluorescens (strain ATCC BAA-477 / NRRL B-23932 / Pf-5).